A 530-amino-acid polypeptide reads, in one-letter code: MPIPAPHGGKLQDLVIRDSSIRSDLFKEIADKKYKTLTLSPRQLCDLELILNGGFSPLTGFLNEEDYNSVVHDMRLSSVKNEKNGKGLLWSMPITLDVGQEFAGKLSKGEKIVLKDLRDEKPLALLTVETVYKPNKQTEAEKVFRGDPEHPAIKYLFETAQEFYVGGSIQGLDYPTHYDYIPFRKTPTELREEFSKLGWDQQKVVAFQTRNPMHRAHRELTVRAANDLGSDGHILIHPVVGLTKPGDIDHHTRVRVYQQILKKYPDGLATLSLLPLAMRMGGDREAMWHSLIRMNYGVDHFIVGRDHAGPGSNSKGVDFYGPYDAQELLAKYKDELEPKIKVVPFRMVTYLPDEDRYAPIDTIDTSKVNTANISGTELRQRLRDGTEIPGWFSYPEVVKVLRESNPPRSKQGFAIVIDSSDSKQGEYLSFALQSTLNQFSGERRITKLSSEQATPFIVNELVKSGSGVIVPTKSNQSDIIKAVGSGNSIIVNFNGEQNADQGIFSLKEDLTSVIGEIVEYLVSQGFYQQS.

Positions 1–178 (MPIPAPHGGK…IQGLDYPTHY (178 aa)) are N-terminal. Residues 179–410 (DYIPFRKTPT…LRESNPPRSK (232 aa)) are catalytic. Gln208 provides a ligand contact to sulfate. ATP contacts are provided by residues 208–211 (QTRN) and 304–307 (GRDH). Catalysis depends on residues Thr209, Arg210, and Asn211. Arg210 is a binding site for sulfate. Residue Ala308 coordinates sulfate. Val348 serves as a coordination point for ATP. The required for oligomerization; adenylyl-sulfate kinase-like stretch occupies residues 411–530 (QGFAIVIDSS…LVSQGFYQQS (120 aa)).

The protein belongs to the sulfate adenylyltransferase family. Homohexamer. Dimer of trimers.

Its subcellular location is the cytoplasm. The catalysed reaction is sulfate + ATP + H(+) = adenosine 5'-phosphosulfate + diphosphate. Its pathway is sulfur metabolism; hydrogen sulfide biosynthesis; sulfite from sulfate: step 1/3. Functionally, catalyzes the first intracellular reaction of sulfate assimilation, forming adenosine-5'-phosphosulfate (APS) from inorganic sulfate and ATP. Plays an important role in sulfate activation as a component of the biosynthesis pathway of sulfur-containing amino acids. This Debaryomyces hansenii (strain ATCC 36239 / CBS 767 / BCRC 21394 / JCM 1990 / NBRC 0083 / IGC 2968) (Yeast) protein is Sulfate adenylyltransferase.